The sequence spans 89 residues: Ubiquinol-cytochrome-c reductase complex assembly factor 3 (89 aa).

At 1–7 (MEVARKA) the chain is on the mitochondrial matrix side. Residues 8-28 (LVAVAVLGGGAGVGSILFALV) traverse the membrane as a helical segment. Positions 23 to 80 (ILFALVTPGELQKQSMLQEMPERDSRRRDEAVRTTELVMATLKDAAATKENVAWRRNW) are mediates lipid-binding. Over 29–89 (TPGELQKQSM…WTVSGDGRSA (61 aa)) the chain is Mitochondrial intermembrane.

Belongs to the UQCC3 family. Associates with the ubiquinol-cytochrome c reductase complex (mitochondrial respiratory chain complex III(CIII) or cytochrome b-c1 complex). Interacts with UQCC1. Forms a complex, named COMC, composed of UQCC1, UQCC2; UQCC3 and UQCC4; mediates MT-CYB hemylation and association with the first nuclear-encoded complex III subunit UQCRQ. Probably cleaved by OMA1 under mitochondrial stress conditions.

It is found in the mitochondrion inner membrane. Functionally, required for the assembly of the ubiquinol-cytochrome c reductase complex (mitochondrial respiratory chain complex III or cytochrome b-c1 complex), mediating cytochrome b recruitment and probably stabilization within the complex. Thereby, plays an important role in ATP production by mitochondria. Cardiolipin-binding protein, it may also control the cardiolipin composition of mitochondria membranes and their morphology. The polypeptide is Ubiquinol-cytochrome-c reductase complex assembly factor 3 (Mus musculus (Mouse)).